Consider the following 496-residue polypeptide: Genome polyprotein (496 aa).

Residues 1 to 447 are Extracellular-facing; it reads SRCTHLENRD…HTVLGGAFNS (447 aa). Intrachain disulfides connect cysteine 3–cysteine 30, cysteine 60–cysteine 116, cysteine 60–cysteine 121, cysteine 74–cysteine 105, cysteine 92–cysteine 116, and cysteine 92–cysteine 121. A fusion peptide region spans residues 98–111; that stretch reads DRGWGNHCGLFGKG. N-linked (GlcNAc...) asparagine; by host glycosylation is present at asparagine 154. Cystine bridges form between cysteine 186–cysteine 290 and cysteine 307–cysteine 338. The helical transmembrane segment at 448 to 468 threads the bilayer; sequence IFGGVGFLPKLLMGVALAWLG. The Cytoplasmic portion of the chain corresponds to 469-479; sequence LNTRNPTMSMS. The helical transmembrane segment at 480–496 threads the bilayer; sequence FLLAGGLVLAMTLGVGA.

Homodimer; in the endoplasmic reticulum and Golgi. In terms of processing, N-glycosylated.

The protein localises to the virion membrane. It is found in the host endoplasmic reticulum membrane. Its function is as follows. Binds to host cell surface receptor and mediates fusion between viral and cellular membranes. Envelope protein is synthesized in the endoplasmic reticulum in the form of heterodimer with protein prM. They play a role in virion budding in the ER, and the newly formed immature particle is covered with 60 spikes composed of heterodimer between precursor prM and envelope protein E. The virion is transported to the Golgi apparatus where the low pH causes dissociation of PrM-E heterodimers and formation of E homodimers. prM-E cleavage is ineficient, and many virions are only partially matured. These uncleaved prM would play a role in immune evasion. The chain is Genome polyprotein from Bos taurus (Bovine).